The primary structure comprises 300 residues: Very-long-chain enoyl-CoA reductase (300 aa).

The helical transmembrane segment at Ser91–Leu111 threads the bilayer. Asn163 is a glycosylation site (N-linked (GlcNAc...) asparagine). A helical transmembrane segment spans residues Val191–Gln211. Asn238 is a glycosylation site (N-linked (GlcNAc...) asparagine). Residues Ile243 to Leu263 traverse the membrane as a helical segment.

It belongs to the steroid 5-alpha reductase family.

The protein localises to the endoplasmic reticulum membrane. It catalyses the reaction a very-long-chain 2,3-saturated fatty acyl-CoA + NADP(+) = a very-long-chain (2E)-enoyl-CoA + NADPH + H(+). It participates in lipid metabolism; fatty acid biosynthesis. Functionally, catalyzes the last of the four reactions of the long-chain fatty acids elongation cycle. This endoplasmic reticulum-bound enzymatic process, allows the addition of 2 carbons to the chain of long- and very long-chain fatty acids/VLCFAs per cycle. This enzyme reduces the trans-2,3-enoyl-CoA fatty acid intermediate to an acyl-CoA that can be further elongated by entering a new cycle of elongation. Thereby, it participates in the production of VLCFAs of different chain lengths that are involved in multiple biological processes as precursors of membrane lipids and lipid mediators. The chain is Very-long-chain enoyl-CoA reductase (gpsn2) from Dictyostelium discoideum (Social amoeba).